We begin with the raw amino-acid sequence, 100 residues long: Small ribosomal subunit protein uS14c (100 aa).

It belongs to the universal ribosomal protein uS14 family. As to quaternary structure, part of the 30S ribosomal subunit.

It localises to the plastid. Binds 16S rRNA, required for the assembly of 30S particles. The sequence is that of Small ribosomal subunit protein uS14c from Cuscuta obtusiflora (Peruvian dodder).